A 262-amino-acid polypeptide reads, in one-letter code: Outer membrane protein assembly factor BamD (262 aa).

Residues 1–18 (MRKIKSLALLAVAALVIG) form the signal peptide. Cys-19 is lipidated: N-palmitoyl cysteine. The S-diacylglycerol cysteine moiety is linked to residue Cys-19.

Belongs to the BamD family. Part of the Bam complex.

It is found in the cell outer membrane. In terms of biological role, part of the outer membrane protein assembly complex, which is involved in assembly and insertion of beta-barrel proteins into the outer membrane. The chain is Outer membrane protein assembly factor BamD from Haemophilus influenzae (strain ATCC 51907 / DSM 11121 / KW20 / Rd).